The sequence spans 500 residues: Sodium/potassium/calcium exchanger 5 (500 aa).

Residues 1-29 (MQTKGGQTWARRALLLGILWATAHLPLSG) form the signal peptide. At 30–66 (TSLPQRLPRATGNSTQCVISPSSEFPEGFFTRQERRD) the chain is on the extracellular side. Residues 67–87 (GGIIIYFLIIVYMFMAISIVC) traverse the membrane as a helical segment. Topologically, residues 88 to 111 (DEYFLPSLEIISESLGLSQDVAGT) are cytoplasmic. Residues 112 to 132 (TFMAAGSSAPELVTAFLGVFI) traverse the membrane as a helical segment. Topologically, residues 133–136 (TKGD) are extracellular. The helical transmembrane segment at 137–157 (IGISTILGSAIYNLLGICAAC) threads the bilayer. Over 158–169 (GLLSNTVSTLSC) the chain is Cytoplasmic. A helical membrane pass occupies residues 170–190 (WPLFRDCAAYTISAAAVLGII). The Extracellular segment spans residues 191–195 (YDNQV). A helical transmembrane segment spans residues 196 to 216 (YWYEGALLLLIYGLYVLVLCF). Residues 217–302 (DIKINQYIIK…PSVFNMPEAD (86 aa)) lie on the Cytoplasmic side of the membrane. A helical transmembrane segment spans residues 303–323 (LKRIFWVLSLPIITLLFLTTP). Residues 324–333 (DCRKKFWKNY) lie on the Extracellular side of the membrane. Residues 334 to 354 (FVITFFMSAIWISAFTYILVW) form a helical membrane-spanning segment. Over 355 to 368 (MVTITGETLEIPDT) the chain is Cytoplasmic. A helical membrane pass occupies residues 369–389 (VMGLTLLAAGTSIPDTIASVL). Residues 390–399 (VARKGKGDMA) lie on the Extracellular side of the membrane. A helical membrane pass occupies residues 400-420 (MSNIVGSNVFDMLCLGIPWFI). Residues 421-437 (KTAFINGSAPAEVNSRG) lie on the Cytoplasmic side of the membrane. The chain crosses the membrane as a helical span at residues 438–458 (LTYITISLNISIIFLFLAVHF). Residues 459–468 (NGWKLDRKLG) lie on the Extracellular side of the membrane. Residues 469 to 489 (IVCLLSYLGLATLSVLYELGI) form a helical membrane-spanning segment. Over 490 to 500 (IGNNKIRGCGG) the chain is Cytoplasmic.

The protein belongs to the Ca(2+):cation antiporter (CaCA) (TC 2.A.19) family. SLC24A subfamily.

It is found in the golgi apparatus. The protein resides in the trans-Golgi network membrane. The protein localises to the melanosome. The enzyme catalyses Ca(2+)(out) + K(+)(out) + 4 Na(+)(in) = Ca(2+)(in) + K(+)(in) + 4 Na(+)(out). Its function is as follows. Calcium, potassium:sodium antiporter that transports 1 Ca(2+) and 1 K(+) to the melanosome in exchange for 4 cytoplasmic Na(+). Involved in pigmentation, possibly by participating in ion transport in melanosomes. Predominant sodium-calcium exchanger in melanocytes. This Homo sapiens (Human) protein is Sodium/potassium/calcium exchanger 5.